The chain runs to 70 residues: uncharacterized protein (70 aa).

Residues 14-34 (CLVVWFACVYSLLILVVLLLI) traverse the membrane as a helical segment.

The protein resides in the virion membrane. This is an uncharacterized protein from Homo sapiens (Human).